The sequence spans 194 residues: Glycerol-3-phosphate acyltransferase (194 aa).

The next 5 helical transmembrane spans lie at 3-23 (IALLLLIAYLLGAIPTGLIVG), 47-67 (VLGKKAGIFVTIFDVAKGVLP), 78-97 (IHGIWFGLAAIIGHVYPIYL), 112-132 (ILGVNPVVFLIIAVIFFTLLF), and 153-173 (LFFDDIILQIISFLIMLLIII).

The protein belongs to the PlsY family. In terms of assembly, probably interacts with PlsX.

The protein resides in the cell membrane. The catalysed reaction is an acyl phosphate + sn-glycerol 3-phosphate = a 1-acyl-sn-glycero-3-phosphate + phosphate. Its pathway is lipid metabolism; phospholipid metabolism. Catalyzes the transfer of an acyl group from acyl-phosphate (acyl-PO(4)) to glycerol-3-phosphate (G3P) to form lysophosphatidic acid (LPA). This enzyme utilizes acyl-phosphate as fatty acyl donor, but not acyl-CoA or acyl-ACP. The polypeptide is Glycerol-3-phosphate acyltransferase (Macrococcus caseolyticus (strain JCSC5402) (Macrococcoides caseolyticum)).